The chain runs to 294 residues: Acetyl-coenzyme A carboxylase carboxyl transferase subunit beta (294 aa).

One can recognise a CoA carboxyltransferase N-terminal domain in the interval 27–294 (LWHKCPSCDA…PSPVALPVTA (268 aa)). Zn(2+) contacts are provided by cysteine 31, cysteine 34, cysteine 50, and cysteine 53. Residues 31-53 (CPSCDAVLYRPELEKTLDVCPKC) form a C4-type zinc finger.

It belongs to the AccD/PCCB family. Acetyl-CoA carboxylase is a heterohexamer composed of biotin carboxyl carrier protein (AccB), biotin carboxylase (AccC) and two subunits each of ACCase subunit alpha (AccA) and ACCase subunit beta (AccD). It depends on Zn(2+) as a cofactor.

It localises to the cytoplasm. It catalyses the reaction N(6)-carboxybiotinyl-L-lysyl-[protein] + acetyl-CoA = N(6)-biotinyl-L-lysyl-[protein] + malonyl-CoA. Its pathway is lipid metabolism; malonyl-CoA biosynthesis; malonyl-CoA from acetyl-CoA: step 1/1. Functionally, component of the acetyl coenzyme A carboxylase (ACC) complex. Biotin carboxylase (BC) catalyzes the carboxylation of biotin on its carrier protein (BCCP) and then the CO(2) group is transferred by the transcarboxylase to acetyl-CoA to form malonyl-CoA. This Ectopseudomonas mendocina (strain ymp) (Pseudomonas mendocina) protein is Acetyl-coenzyme A carboxylase carboxyl transferase subunit beta.